We begin with the raw amino-acid sequence, 515 residues long: Mucin-like protein Glc1.8a (515 aa).

Residues 1–20 form the signal peptide; sequence MSQITLIILILAIGFSCTKS. Over 21–467 the chain is Extracellular; sequence HPINSTRDGE…ANDIKKPAFP (447 aa). N-linked (GlcNAc...) asparagine; by host glycosylation is found at Asn24, Asn45, Asn51, Asn60, Asn85, Asn93, Asn102, Asn123, Asn129, Asn138, Asn180, Asn201, Asn207, Asn216, Asn258, Asn279, Asn285, Asn319, Asn327, Asn336, Asn357, Asn363, Asn372, Asn397, Asn405, Asn413, Asn434, and Asn441. The tract at residues 80–114 is disordered; it reads SKKDENITGQSEINTSAKSQPINSTRDGEDSGTDL. Over residues 86-104 the composition is skewed to polar residues; sequence ITGQSEINTSAKSQPINST. The segment at 314–358 is disordered; sequence SKKDENVTGQSEINTSAKSQPINSTRDGEDSGTDLKNLLTDPANT. Positions 320-338 are enriched in polar residues; that stretch reads VTGQSEINTSAKSQPINST. Residues 393–413 form a disordered region; the sequence is RKDENVTGQSEFNISTNSNLN. The helical transmembrane segment at 468 to 488 threads the bilayer; that stretch reads YCIILITFQIVTVGMIIYLVF. At 489-515 the chain is on the cytoplasmic side; it reads RTMRKPCQSERAIPLNTFGFGNNSSHE.

Belongs to the polydnaviridae Glc1.8 protein family.

Its subcellular location is the host membrane. Its function is as follows. Involved in suppression of the insect cellular immune response. Inhibits host hemocyte adhesion and phagocytosis. The polypeptide is Mucin-like protein Glc1.8a (O9) (Microplitis demolitor (Parasitoid wasp)).